The primary structure comprises 976 residues: MTSIYTSDLKNHRRAPPPPNGAAGSGSGSSSGSGSGSGSGSGSGSLTNIVTSSNSLGVTANQTKPIQLNINSSKRQSGWVHVKDDGIFTSFRWNKRFMVINDKTLNFYKQEPYSSDGNSNSNTPDLSFPLYLINNINLKPNSGYSKTSQSFEIVPKNNNKSILISVKTNNDYLDWLDAFTTKCPLVQIGENNSGVSSSHPHLQIQHLTNGSLNGNSSSSPTSGLSSSSVLTGGNSGVSGPINFTHKVHVGFDPASGNFTGLPDTWKSLLQHSKITNEDWKKDPVAVIKVLEFYSDINGGNSAAGTPIGSPMINSKTNNNNNDPNNYSSAKNNVQEANLQEWVKPPAKSTVSQFKPSRAAPKPPTPYHLTQLNGSSHQHTSSSGSLPSSGNNNNNNNSTNNNNTKNVSPLNNLMNKSELIPARRAPPPPTSGTSSDTYSNKNHQDRSGYEQQRQQRTDSSQQQQQQQKQHQYQQKSQQQQQQPLSSHQGGTSHIPKQVPPTLPSSGPPTQAASGKSMPSKIHPDLKIQQGTNNYIKSSGTDANQVDGDAKQFIKPFNLQSKKSQQQLASKQPSPPSSQQQQQKPMTSHGLMGTSHSVTKPLNPVNDPIKPLNLKSSKSKEALNETSGVSKTPSPTDKSNKPTAPASGPAVTKTAKQLKKERERLNDLQIIAKLKTVVNNQDPKPLFRIVEKAGQGASGNVYLAEMIKDNNRKIAIKQMDLDAQPRKELIINEILVMKDSQHKNIVNFLDSYLIGDNELWVIMEYMQGGSLTEIIENNDFKLNEKQIATICFETLKGLQHLHKKHIIHRDIKSDNVLLDAYGNVKITDFGFCAKLTDQRNKRATMVGTPYWMAPEVVKQKEYDEKVDVWSLGIMTIEMIEGEPPYLNEEPLKALYLIATNGTPKLKKPELLSNSIKKFLSICLCVDVRYRASTDELLEHSFIQHKSGKIEELAPLLEWKKQQQKHQQHKQETSDTGFA.

The tract at residues 1–46 (MTSIYTSDLKNHRRAPPPPNGAAGSGSGSSSGSGSGSGSGSGSGSL) is disordered. The span at 23-43 (AGSGSGSSSGSGSGSGSGSGS) shows a compositional bias: gly residues. One can recognise a PH domain in the interval 73–184 (SKRQSGWVHV…WLDAFTTKCP (112 aa)). Positions 207–231 (LTNGSLNGNSSSSPTSGLSSSSVLT) are disordered. Residues 237–250 (VSGPINFTHKVHVG) enclose the CRIB domain. Disordered regions lie at residues 298-522 (GGNS…KIHP) and 559-658 (SKKS…QLKK). Low complexity-rich tracts occupy residues 313-332 (NSKT…AKNN) and 371-411 (LNGS…PLNN). Residues 430–440 (SGTSSDTYSNK) show a composition bias toward polar residues. The span at 441–455 (NHQDRSGYEQQRQQR) shows a compositional bias: basic and acidic residues. Low complexity predominate over residues 456-487 (TDSSQQQQQQQKQHQYQQKSQQQQQQPLSSHQ). Pro residues predominate over residues 496–505 (QVPPTLPSSG). The span at 559-583 (SKKSQQQLASKQPSPPSSQQQQQKP) shows a compositional bias: low complexity. The segment covering 622–635 (NETSGVSKTPSPTD) has biased composition (polar residues). The Protein kinase domain maps to 685-940 (FRIVEKAGQG…TDELLEHSFI (256 aa)). Residues 691–699 (AGQGASGNV) and Lys-715 each bind ATP. Asp-808 acts as the Proton acceptor in catalysis.

This sequence belongs to the protein kinase superfamily. STE Ser/Thr protein kinase family. STE20 subfamily. Interacts (via the CRIB domain) with CDC42.

It catalyses the reaction L-seryl-[protein] + ATP = O-phospho-L-seryl-[protein] + ADP + H(+). The enzyme catalyses L-threonyl-[protein] + ATP = O-phospho-L-threonyl-[protein] + ADP + H(+). In terms of biological role, ser/Thr kinase required for wild-type filamentous growth, chlamydospore formation, and virulence in mouse systemic infection. The sequence is that of Serine/threonine-protein kinase CLA4 (CLA4) from Candida albicans (strain SC5314 / ATCC MYA-2876) (Yeast).